Reading from the N-terminus, the 138-residue chain is Small ribosomal subunit protein uS11c (138 aa).

The segment at Met-1–Val-22 is disordered.

This sequence belongs to the universal ribosomal protein uS11 family. In terms of assembly, part of the 30S ribosomal subunit.

It localises to the plastid. This is Small ribosomal subunit protein uS11c from Cuscuta reflexa (Southern Asian dodder).